Consider the following 370-residue polypeptide: Erythronate-4-phosphate dehydrogenase (370 aa).

Residues Ser45 and Thr66 each coordinate substrate. NAD(+) contacts are provided by Asp142 and Thr169. The active site involves Arg202. Asp228 is an NAD(+) binding site. Glu233 is a catalytic residue. Catalysis depends on His250, which acts as the Proton donor. Gly253 contacts NAD(+). Residue Tyr254 participates in substrate binding.

Belongs to the D-isomer specific 2-hydroxyacid dehydrogenase family. PdxB subfamily. As to quaternary structure, homodimer.

It localises to the cytoplasm. The enzyme catalyses 4-phospho-D-erythronate + NAD(+) = (R)-3-hydroxy-2-oxo-4-phosphooxybutanoate + NADH + H(+). It functions in the pathway cofactor biosynthesis; pyridoxine 5'-phosphate biosynthesis; pyridoxine 5'-phosphate from D-erythrose 4-phosphate: step 2/5. Catalyzes the oxidation of erythronate-4-phosphate to 3-hydroxy-2-oxo-4-phosphonooxybutanoate. This is Erythronate-4-phosphate dehydrogenase from Teredinibacter turnerae (strain ATCC 39867 / T7901).